Consider the following 1478-residue polypeptide: FYVE and coiled-coil domain-containing protein 1 (1478 aa).

The residue at position 2 (alanine 2) is an N-acetylalanine. Positions 4–33 form a coiled coil; that stretch reads TNAESQLQRIIRDLQDAVTELSKEFQEAGE. Positions 36–169 constitute an RUN domain; sequence TDDSTSLHKF…VQFDLASRGF (134 aa). A Phosphoserine modification is found at serine 196. Residues 225–280 are a coiled coil; sequence NNEALEGFDEMRLELDQLEVREKQLRERMQQLDRENQELRAAVSQQGEQLQTERER. Serine 342 carries the phosphoserine modification. Threonine 381 bears the Phosphothreonine mark. Coiled coils occupy residues 394–555 and 596–1151; these read SDAA…MLER and QEAQ…KDAL. The disordered stretch occupies residues 586-613; that stretch reads GKPEEEQRGLQEAQLDDTKVQEGSQEEE. The residue at position 878 (serine 878) is a Phosphoserine. The FYVE-type zinc-finger motif lies at 1173 to 1231; the sequence is DTEANHCLDCKREFSWMVRRHHCRICGRIFCYYCCNNYVLSKHGGKKERCCRACFQKLS. Residues cysteine 1179, cysteine 1182, cysteine 1195, cysteine 1198, cysteine 1203, cysteine 1206, cysteine 1223, and cysteine 1226 each coordinate Zn(2+). Residues 1231 to 1261 are compositionally biased toward low complexity; the sequence is SEGPGSPDSSGSGTSQGEPSPALSPASPGPQ. Disordered stretches follow at residues 1231–1277 and 1294–1332; these read SEGP…PPDD and SGSSLPETPTETDSLDPNAAEQDTTSTSLTPEDTEDMPV. Composition is skewed to polar residues over residues 1294–1305 and 1314–1324; these read SGSSLPETPTET and EQDTTSTSLTP. The 130-residue stretch at 1337-1466 folds into the GOLD domain; the sequence is EICLLKSGEL…SKKVFYHLTV (130 aa).

Can form homodimers. Interacts (via C-terminus) with MAP1LC3B. Interacts with RAB7A; the interaction with RAB7A induces FYCO1 recruitment to late endosomal/lysosomal compartments. Interacts with MAP1LC3B. As to expression, expressed in heart and skeletal muscle.

It localises to the cytoplasmic vesicle. The protein localises to the autophagosome. The protein resides in the endosome. Its subcellular location is the lysosome. May mediate microtubule plus end-directed vesicle transport. The protein is FYVE and coiled-coil domain-containing protein 1 (FYCO1) of Homo sapiens (Human).